A 273-amino-acid polypeptide reads, in one-letter code: Beta-lactamase OXA-23 (273 aa).

A signal peptide spans 1-17 (MNKYFTCYVVASLFLSG). The active-site Acyl-ester intermediate is Ser-79. A beta-lactam-binding residues include Ser-79, Lys-82, Ser-126, Thr-217, Trp-219, and Arg-259. Lys-82 is subject to N6-carboxylysine.

It belongs to the class-D beta-lactamase family. In terms of assembly, monomer. Post-translationally, carboxylated on the epsilon-amino group of a lysine, with the resulting carbamate functional group serving as a general base. Probably N-carboxylated at Lys-82 at neutral pH in vivo and undergoes complete N-decarboxylation, at pH 4.1, in vitro.

It is found in the periplasm. The catalysed reaction is a beta-lactam + H2O = a substituted beta-amino acid. Its activity is regulated as follows. Inhibited by the desmethyl carbapenem, MA-1-206, via a covalent binding to Ser-79. Class D beta-lactamase which confers resistance to the beta-lactam antibiotics, including ampicillin, and carbapenems such as imipenem and meropenem. Acts via hydrolysis of the beta-lactam ring. Has penicillin-, cephalosporin- and carbapenem-hydrolyzing activities, but lacks ceftazidime-hydrolyzing activity. The sequence is that of Beta-lactamase OXA-23 from Acinetobacter baumannii.